Reading from the N-terminus, the 483-residue chain is 2-methylcitrate dehydratase (483 aa).

It belongs to the PrpD family. Monomer.

The catalysed reaction is (2S,3S)-2-methylcitrate = 2-methyl-cis-aconitate + H2O. It carries out the reaction citrate = D-threo-isocitrate. The protein operates within organic acid metabolism; propanoate degradation. It participates in carbohydrate metabolism; tricarboxylic acid cycle; isocitrate from oxaloacetate: step 2/2. In terms of biological role, involved in the catabolism of short chain fatty acids (SCFA) via the tricarboxylic acid (TCA)(acetyl degradation route) and via the 2-methylcitrate cycle I (propionate degradation route). Catalyzes the dehydration of 2-methylcitrate (2-MC) to yield the cis isomer of 2-methyl-aconitate. It is also able to catalyze the dehydration of citrate and the hydration of cis-aconitate at a lower rate. Due to its broad substrate specificity, it seems to be responsible for the residual aconitase activity of the acnAB-null mutant. This chain is 2-methylcitrate dehydratase, found in Escherichia coli (strain K12).